The primary structure comprises 374 residues: Histidinol-phosphate aminotransferase (374 aa).

Lysine 215 carries the N6-(pyridoxal phosphate)lysine modification.

This sequence belongs to the class-II pyridoxal-phosphate-dependent aminotransferase family. Histidinol-phosphate aminotransferase subfamily. As to quaternary structure, homodimer. It depends on pyridoxal 5'-phosphate as a cofactor.

It carries out the reaction L-histidinol phosphate + 2-oxoglutarate = 3-(imidazol-4-yl)-2-oxopropyl phosphate + L-glutamate. Its pathway is amino-acid biosynthesis; L-histidine biosynthesis; L-histidine from 5-phospho-alpha-D-ribose 1-diphosphate: step 7/9. This is Histidinol-phosphate aminotransferase from Yersinia enterocolitica serotype O:8 / biotype 1B (strain NCTC 13174 / 8081).